The sequence spans 107 residues: 4-carboxymethyl-4-methylbutenolide mutase (107 aa).

Catalysis depends on histidine 26, which acts as the Proton donor/acceptor. 3-methylmuconolactone contacts are provided by histidine 26 and tyrosine 39. The 4-methylmuconolactone site is built by histidine 26 and tyrosine 39.

This sequence belongs to the MmlI family. Homodimer.

It catalyses the reaction 4-methylmuconolactone = 3-methylmuconolactone. With respect to regulation, inhibited by p-chloromercuribenzoate. Isomerase involved in the degradation of 4-methylsalicylate and 5-methylsalicylate. Catalyzes the isomerization of the dead-end metabolite 4-methylmuconolactone (4-ML) to 3-methylmuconolactone (3-ML), which can then be further degraded through a modified 3-oxoadipate pathway. Can also use 1-methylbislactone but not 3-methyl-cis,cis-muconate. This Pseudomonas reinekei protein is 4-carboxymethyl-4-methylbutenolide mutase.